The sequence spans 208 residues: V-type ATP synthase subunit D (208 aa).

The protein belongs to the V-ATPase D subunit family.

Functionally, produces ATP from ADP in the presence of a proton gradient across the membrane. The protein is V-type ATP synthase subunit D of Streptococcus pyogenes serotype M1.